The primary structure comprises 568 residues: Peroxisomal leader peptide-processing protease (568 aa).

The tract at residues 332–568 (TPRGLPLRDL…PLSEVPRSKL (237 aa)) is serine protease. Active-site charge relay system residues include H374, D410, and S483.

This sequence belongs to the peptidase S1B family. In terms of assembly, homodimer. Forms a heterodimer with the C-terminal cleavage product (49 kDa form). Forms a heterodimer with the N-terminal cleavage product (10 kDa form). Interacts with PEX5. Interacts with LONP2. Self-cleavage gives rise to an N-terminal 10-kDa fragment and C-terminal 49-kDa fragment upon import into the peroxisomes. The full-lengh TYSND1 is the active the proteolytic processing of PTS1- and PTS2-proteins and in self-cleavage, and intermolecular self-cleavage of TYSND1 down-regulates its protease activity.

Its subcellular location is the peroxisome. With respect to regulation, inhibited by N-ethylmaleimide (NEM). Not affected by leupeptin or trans-epoxysuccinyl-l-leucylamido-(4-gianidino) butane (E64). Its function is as follows. Peroxisomal protease that mediates both the removal of the leader peptide from proteins containing a PTS2 target sequence and processes several PTS1-containing proteins. Catalyzes the processing of PTS1-proteins involved in the peroxisomal beta-oxidation of fatty acids. The sequence is that of Peroxisomal leader peptide-processing protease (Tysnd1) from Mus musculus (Mouse).